Consider the following 128-residue polypeptide: Ribosome-binding factor A (128 aa).

Belongs to the RbfA family. In terms of assembly, monomer. Binds 30S ribosomal subunits, but not 50S ribosomal subunits or 70S ribosomes.

It localises to the cytoplasm. Its function is as follows. One of several proteins that assist in the late maturation steps of the functional core of the 30S ribosomal subunit. Associates with free 30S ribosomal subunits (but not with 30S subunits that are part of 70S ribosomes or polysomes). Required for efficient processing of 16S rRNA. May interact with the 5'-terminal helix region of 16S rRNA. This Microcystis aeruginosa (strain NIES-843 / IAM M-2473) protein is Ribosome-binding factor A.